We begin with the raw amino-acid sequence, 234 residues long: Response regulator RppA (234 aa).

One can recognise a Response regulatory domain in the interval 2-118 (RILLVEDETD…ELLARLRALQ (117 aa)). A 4-aspartylphosphate modification is found at D53. Positions 126–232 (PQILTLGNFS…VPGQGYRFTL (107 aa)) form a DNA-binding region, ompR/PhoB-type.

As to quaternary structure, interacts with histidine kinase Hik2; may accept phosphate from Hik2.

Member of two-component regulatory system RppA/RppB, involved in the establishment of the appropriate stoichiometry between the 2 photosystems. It senses changes in the plastoquinone (PQ) redox poise. Another group shows this two-component pair, renamed NrsR/NrsS, controls the nickel-dependent expression of the nrsBACD operon; they suggest the photosystem-related activities seen earlier are due to the expression of NrsS (RppB) in the absence of its natural substrate NrsR (RppA). May accept phosphate from Hik2 in a possible Hik2/RppA two-component system. The protein is Response regulator RppA of Synechocystis sp. (strain ATCC 27184 / PCC 6803 / Kazusa).